Here is a 519-residue protein sequence, read N- to C-terminus: Sodium-dependent dicarboxylate transporter SdcS (519 aa).

The next 14 membrane-spanning stretches (helical) occupy residues 29–49 (VGQLVGLILGPLLFVLTLLLF), 59–79 (VFVLAITLWIATWWITEAIPI), 103–123 (AQYGNDIIFLFLGGFILAIAM), 136–156 (IINTLGTSTGRILLGFMIATG), 159–179 (SMFVSNTAAVMIMIPIGLAII), 201–221 (ALVLAIGYAGTIGGLGTLIGT), 241–261 (FAKWMIIGVPTVIVLLFLVWI), 297–317 (KVVLIVFLLASFLWITREFLL), 322–342 (FTSEVADGTIAMFISVLLFLI), 362–382 (LPWGVLILFGGGLALAKGISE), 395–415 (LIEGVSPLVIVLVITIFVLFL), 428–448 (ILPILATLSVAVNVHPLLLMV), 451–471 (AMAANCAYMLPVGTPPNAIVF), and 490–510 (LLSIVVIVLVVYFLVPPVLGI).

It belongs to the SLC13A/DASS transporter (TC 2.A.47) family. NADC subfamily.

The protein resides in the cell membrane. Mediates the transport of dicarboxylates across the cytoplasmic membrane via a Na(+)-electrochemical gradient. This Staphylococcus saprophyticus subsp. saprophyticus (strain ATCC 15305 / DSM 20229 / NCIMB 8711 / NCTC 7292 / S-41) protein is Sodium-dependent dicarboxylate transporter SdcS (sdcS).